A 796-amino-acid polypeptide reads, in one-letter code: MATDWQPECMVSQNQAALESIGAHSDRALQNTSGNVQAYSDSLAHHDTTGRDDPLQHYTLKYPHPPVPVPSHPLPTATANLYHPQLLSHRYQVKKLRRLQSNGSSYAGSRRGRSYLKSQKYLEYRARPRRDTGKDGEPVWSDELEDAFQQALEANPPMGRRKWSERGKSYGRNELIAEYIYKLTGKRRTRKQVSSHLQVLDSFLKGDPDWERLVREQSDRSTAQTQPVGPRWRTSMDHLPSSHYGTHATSSYPEPMRLMPPYSADLQLPQYSPTSTQQDTNNNTIQGLSFDMWVSAPNKPDRIDDAYHLYTRLQGDQRQPPMPLEDLKNWRVSFPHLSSSLSDVNDPLNCEIILLETNLELMDDFPPMGSRLGIHLELDIANPMSGTAPTVNQMENWTCSTYIYEDGRRTMEAYHNLTKPHTTKVKPPFESSWWAKTFTKLTQDKREAESTGHHHAADERTRRYFHSLTAVQEIRATVPPSLRRLQNHYPGSPAEESKRMAIILWKFRQTRPNEVGTTTWRKLITSPDRALTNSPRPSTAIDLPPLSLDSILLSKPTSNLYQAPPQHHDLLHQNAPSQQSWSLYQPSHDHVNSLYHSAGAFDFLNSITKPEEGLSDKTAPTSVLDPFPNLTQQTTSQTAGINVSSGTPVMLQIPDLSLSSNLGTYGLGHESHYVPSHHNAANLHDHSSTTGLGHYFAPSTQSLDEISHSHAPWSAPNTTISGDTSGGNYHHLPFTTSDHSVTVSRESHQNHSFEGLLPSDDLVGIVGGLSGDPNMNGAGPEHTSSAYAEHTAVEAV.

The TEA DNA-binding region spans 133–207 (GKDGEPVWSD…QVLDSFLKGD (75 aa)). The interval 215–254 (REQSDRSTAQTQPVGPRWRTSMDHLPSSHYGTHATSSYPE) is disordered. Polar residues predominate over residues 243 to 252 (HYGTHATSSY). The segment at 341–362 (LSDVNDPLNCEIILLETNLELM) is leucine-zipper-like. The interval 612–643 (EGLSDKTAPTSVLDPFPNLTQQTTSQTAGINV) is disordered. Residues 629 to 643 (NLTQQTTSQTAGINV) show a composition bias toward polar residues.

Belongs to the TEC1 family.

Its subcellular location is the nucleus. Functionally, brlA, abaA and wetA are pivotal regulators of conidiophore development and conidium maturation. They act individually and together to regulate their own expression and that of numerous other sporulation-specific gene. Controls temporal and spatial specificity in Aspergillus development. Directs the differentiation of phialides and is continuously required for maintenance of their function. Expression of abaA leads to activation of brlA and wetA, cessation of vegetative growth, and accentuated cellular vacuolization. Binds to the sequence 5'-CATTCY-3', where Y is a pyrimidine, making both major- and minor-groove contacts. Multiple abaA binding sites are present in the cis-acting regulatory regions of several developmentally controlled structural genes as well as those of the upstream regulatory gene brlA, the downstream regulatory gene wetA, and abaA itself. In Emericella nidulans (strain FGSC A4 / ATCC 38163 / CBS 112.46 / NRRL 194 / M139) (Aspergillus nidulans), this protein is Conidiophore development regulator abaA.